We begin with the raw amino-acid sequence, 123 residues long: Histone H2B.1/H2B.2 (123 aa).

A disordered region spans residues 1 to 30 (MPPKVSGKAAKKAGKAQKNITKGDKKKNRK). An O-linked (GlcNAc) serine glycan is attached at Ser-110. A Glycyl lysine isopeptide (Lys-Gly) (interchain with G-Cter in ubiquitin) cross-link involves residue Lys-118.

It belongs to the histone H2B family. The nucleosome is a histone octamer containing two molecules each of H2A, H2B, H3 and H4 assembled in one H3-H4 heterotetramer and two H2A-H2B heterodimers. The octamer wraps approximately 147 bp of DNA. In terms of processing, monoubiquitination of Lys-118 gives a specific tag for epigenetic transcriptional activation and is also prerequisite for histone H3 'Lys-4' and 'Lys-79' methylation. Post-translationally, glcNAcylation at Ser-110 promotes monoubiquitination of Lys-118. It fluctuates in response to extracellular glucose, and associates with transcribed genes.

The protein localises to the nucleus. The protein resides in the chromosome. Core component of nucleosome. Nucleosomes wrap and compact DNA into chromatin, limiting DNA accessibility to the cellular machineries which require DNA as a template. Histones thereby play a central role in transcription regulation, DNA repair, DNA replication and chromosomal stability. DNA accessibility is regulated via a complex set of post-translational modifications of histones, also called histone code, and nucleosome remodeling. The sequence is that of Histone H2B.1/H2B.2 from Tigriopus californicus (Marine copepod).